We begin with the raw amino-acid sequence, 532 residues long: Chromobox protein homolog 2 (532 aa).

An involved in the interaction with H3C15 and H3C1 region spans residues 1–66; that stretch reads MEELSSVGEQ…AFQKKEHEKE (66 aa). Positions 12–70 constitute a Chromo domain; sequence FAAECILSKRLRKGKLEYLVKWRGWSSKHNSWEPEENILDPRLLLAFQKKEHEKEVQNR. Residues 60–69 are compositionally biased toward basic and acidic residues; the sequence is KKEHEKEVQN. A disordered region spans residues 60–204; it reads KKEHEKEVQN…APASKLPPPL (145 aa). Residues 70 to 82 show a composition bias toward basic residues; sequence RKRGKRPRGRPRK. A DNA-binding region (a.T hook) is located at residues 75 to 87; it reads RPRGRPRKLTAMS. Residues 103–119 are compositionally biased toward low complexity; that stretch reads KSKSSSSSSSSTSSSSS. The segment covering 128-140 has biased composition (basic and acidic residues); sequence LDAKRGPRGRETH. Residues Lys-146 and Lys-153 each participate in a glycyl lysine isopeptide (Lys-Gly) (interchain with G-Cter in SUMO2) cross-link. The Nuclear localization signal signature appears at 163 to 168; the sequence is KRGRKP. Residue Arg-247 is modified to Asymmetric dimethylarginine; alternate. Omega-N-methylarginine; alternate is present on Arg-247. 2 disordered regions span residues 296-348 and 379-493; these read KGEL…PAPT and KGVP…SQDW. The residue at position 302 (Ser-302) is a Phosphoserine. Low complexity predominate over residues 464 to 478; sequence SSSSDSDPDSASPPS. Polar residues predominate over residues 479-493; the sequence is TGQNPSVSVQTSQDW.

In terms of assembly, component of a PRC1-like complex. The composition of the PRC1 complex may differ between the PRC1 complex in pluripotent embryonic stem cells containing RNF2, CBX7 and PCGF2, and the PRC1 complex in differentiating cells containing RNF2, CBX2, CBX4 and BMI1. May interact with H3C15, H3C1 and RNF2. Interacts (via chromodomain) with histone H3K9Me3 and H3K27me3.

The protein resides in the nucleus. It is found in the chromosome. Its function is as follows. Component of a Polycomb group (PcG) multiprotein PRC1-like complex, a complex class required to maintain the transcriptionally repressive state of many genes, including Hox genes, throughout development. PcG PRC1 complex acts via chromatin remodeling and modification of histones; it mediates monoubiquitination of histone H2A 'Lys-119', rendering chromatin heritably changed in its expressibility. Binds to histone H3 trimethylated at 'Lys-9' (H3K9me3) or at 'Lys-27' (H3K27me3). Plays a role in the lineage differentiation of the germ layers in embryonic development. Involved in sexual development, acting as activator of NR5A1 expression. The polypeptide is Chromobox protein homolog 2 (CBX2) (Homo sapiens (Human)).